We begin with the raw amino-acid sequence, 402 residues long: Putative polyketide beta-ketoacyl synthase 2 (402 aa).

2 disordered regions span residues 1 to 30 and 188 to 222; these read MTPV…WAPR and VEPR…FDRD. A Ketosynthase family 3 (KS3) domain is found at 1–400; it reads MTPVAVTGMG…GFNSALVVRA (400 aa). Positions 192–205 are enriched in low complexity; it reads SAPGAGSPSSPAGG.

This sequence belongs to the thiolase-like superfamily. Beta-ketoacyl-ACP synthases family.

The protein operates within antifungal biosynthesis; monensin biosynthesis. The protein is Putative polyketide beta-ketoacyl synthase 2 of Streptomyces virginiae (Streptomyces cinnamonensis).